The following is a 225-amino-acid chain: MDQSLTQDRPLAAVFRRLGSELMPPVVETFDRSKTIFFPGDPAERVYFLLKGAVKLSRVYEAGEEITVALLRENSVFGVLSLVTGQRSDRFYHAVAFTPVELLSAPIEQVEQALKEHPDLSLLMLQGLSSRILQTEMMIETLAHRDMGSRLVSFLLILCRDFGVPAPDGIRIDLKLSHQAIAEAIGSTRVTVTRLLGDLREGNMISITKKKITVHNPVALSQQFT.

Position 9–131 (9–131 (RPLAAVFRRL…LLMLQGLSSR (123 aa))) interacts with a nucleoside 3',5'-cyclic phosphate. The region spanning 145–218 (RDMGSRLVSF…KKKITVHNPV (74 aa)) is the HTH crp-type domain. Residues 177-196 (SHQAIAEAIGSTRVTVTRLL) constitute a DNA-binding region (H-T-H motif).

Its function is as follows. Required for full expression of proteins subject to ammonium repression. Transcriptional activator of genes subject to nitrogen control. This is Global nitrogen regulator (ntcA) from Synechocystis sp. (strain ATCC 27184 / PCC 6803 / Kazusa).